The chain runs to 156 residues: Small ribosomal subunit protein uS7 (156 aa).

The protein belongs to the universal ribosomal protein uS7 family. Part of the 30S ribosomal subunit. Contacts proteins S9 and S11.

In terms of biological role, one of the primary rRNA binding proteins, it binds directly to 16S rRNA where it nucleates assembly of the head domain of the 30S subunit. Is located at the subunit interface close to the decoding center, probably blocks exit of the E-site tRNA. The polypeptide is Small ribosomal subunit protein uS7 (Geobacillus sp. (strain WCH70)).